Here is a 235-residue protein sequence, read N- to C-terminus: Protein FAM3B (235 aa).

The first 29 residues, 1 to 29 (MRPLAGGLLKVVFVVFASLCAWYSGYLLA), serve as a signal peptide directing secretion. 2 disulfides stabilise this stretch: Cys63–Cys91 and Cys69–Cys229. In terms of domain architecture, GG-type lectin spans 72–233 (DTYAYRLLSG…IQIEGCIPKE (162 aa)). Residues Asn120 and Asn208 are each glycosylated (N-linked (GlcNAc...) asparagine).

Belongs to the FAM3 family. 2 N-termini have been observed in the mature protein: the first at Glu-30, resulting from signal peptide cleavage, the second at Ser-46. In terms of processing, O-glycosylated. Highly expressed in the pancreas. Also found in the colon, kidney, prostate, small intestine and testis.

It is found in the secreted. Functionally, induces apoptosis of alpha and beta cells in a dose- and time-dependent manner. This Homo sapiens (Human) protein is Protein FAM3B (FAM3B).